Consider the following 140-residue polypeptide: Large ribosomal subunit protein bL17 (140 aa).

This sequence belongs to the bacterial ribosomal protein bL17 family. As to quaternary structure, part of the 50S ribosomal subunit. Contacts protein L32.

The chain is Large ribosomal subunit protein bL17 from Gluconobacter oxydans (strain 621H) (Gluconobacter suboxydans).